A 360-amino-acid polypeptide reads, in one-letter code: Phospho-N-acetylmuramoyl-pentapeptide-transferase (360 aa).

The next 10 membrane-spanning stretches (helical) occupy residues Gly-27–Leu-47, Gly-70–Trp-90, Val-98–Leu-118, Leu-134–Ala-154, Ala-168–Gly-188, Gly-199–Val-219, Leu-239–Pro-259, Ile-263–Ala-283, Ile-288–Val-308, and Gln-337–Leu-357.

It belongs to the glycosyltransferase 4 family. MraY subfamily. It depends on Mg(2+) as a cofactor.

The protein resides in the cell inner membrane. The catalysed reaction is UDP-N-acetyl-alpha-D-muramoyl-L-alanyl-gamma-D-glutamyl-meso-2,6-diaminopimeloyl-D-alanyl-D-alanine + di-trans,octa-cis-undecaprenyl phosphate = di-trans,octa-cis-undecaprenyl diphospho-N-acetyl-alpha-D-muramoyl-L-alanyl-D-glutamyl-meso-2,6-diaminopimeloyl-D-alanyl-D-alanine + UMP. It participates in cell wall biogenesis; peptidoglycan biosynthesis. Functionally, catalyzes the initial step of the lipid cycle reactions in the biosynthesis of the cell wall peptidoglycan: transfers peptidoglycan precursor phospho-MurNAc-pentapeptide from UDP-MurNAc-pentapeptide onto the lipid carrier undecaprenyl phosphate, yielding undecaprenyl-pyrophosphoryl-MurNAc-pentapeptide, known as lipid I. This chain is Phospho-N-acetylmuramoyl-pentapeptide-transferase, found in Methylorubrum populi (strain ATCC BAA-705 / NCIMB 13946 / BJ001) (Methylobacterium populi).